Reading from the N-terminus, the 392-residue chain is Metallophosphoesterase 1 (392 aa).

A helical membrane pass occupies residues 25 to 45; that stretch reads KLAALVFAVVLFCEFLIYYLV. Residues Asp-73, Asp-115, Asn-153, His-246, His-300, and His-302 each contribute to the a divalent metal cation site. A helical transmembrane segment spans residues 352 to 372; sequence DTVLATYCVAAGLLVVLILVH.

The protein belongs to the metallophosphoesterase superfamily. MPPE1 family. In terms of assembly, interacts with GPI-anchor proteins (via the GPI portion). Interacts with TMED10. The cofactor is Mn(2+).

The protein localises to the endoplasmic reticulum-Golgi intermediate compartment membrane. Its function is as follows. Metallophosphoesterase that catalyzes the removal of a side-chain ethanolamine-phosphate (EtNP) from the second mannose of the GPI-anchor protein intermediate. Participates in the glycan remodeling steps of GPI-anchor maturation to allow an efficient transport of GPI-anchor proteins from the endoplasmic reticulum to the Golgi. The polypeptide is Metallophosphoesterase 1 (Ailuropoda melanoleuca (Giant panda)).